The primary structure comprises 207 residues: Putative 3-methyladenine DNA glycosylase (207 aa).

Residues 182 to 193 (PAPAGARAARAP) show a composition bias toward low complexity. The tract at residues 182 to 207 (PAPAGARAARAPAPAPRPRRPRGSGP) is disordered. Residues 198–207 (RPRRPRGSGP) show a composition bias toward basic residues.

The protein belongs to the DNA glycosylase MPG family.

In Anaeromyxobacter dehalogenans (strain 2CP-C), this protein is Putative 3-methyladenine DNA glycosylase.